A 98-amino-acid polypeptide reads, in one-letter code: Large ribosomal subunit protein uL23 (98 aa).

It belongs to the universal ribosomal protein uL23 family. Part of the 50S ribosomal subunit. Contacts protein L29, and trigger factor when it is bound to the ribosome.

Its function is as follows. One of the early assembly proteins it binds 23S rRNA. One of the proteins that surrounds the polypeptide exit tunnel on the outside of the ribosome. Forms the main docking site for trigger factor binding to the ribosome. In Borrelia garinii subsp. bavariensis (strain ATCC BAA-2496 / DSM 23469 / PBi) (Borreliella bavariensis), this protein is Large ribosomal subunit protein uL23.